The following is a 351-amino-acid chain: GTP 3',8-cyclase (351 aa).

One can recognise a Radical SAM core domain in the interval 29-254 (RFGRVARDLR…EHGREDPSAP (226 aa)). Arginine 38 is a GTP binding site. [4Fe-4S] cluster contacts are provided by cysteine 45 and cysteine 49. An S-adenosyl-L-methionine-binding site is contributed by tyrosine 51. A [4Fe-4S] cluster-binding site is contributed by cysteine 52. GTP is bound at residue arginine 89. Residue glycine 93 participates in S-adenosyl-L-methionine binding. Threonine 120 contributes to the GTP binding site. Serine 144 is a binding site for S-adenosyl-L-methionine. Lysine 181 serves as a coordination point for GTP. Methionine 214 is a binding site for S-adenosyl-L-methionine. Cysteine 278 and cysteine 281 together coordinate [4Fe-4S] cluster. Residue 283 to 285 (RTR) participates in GTP binding. Cysteine 295 lines the [4Fe-4S] cluster pocket.

It belongs to the radical SAM superfamily. MoaA family. Monomer and homodimer. The cofactor is [4Fe-4S] cluster.

The enzyme catalyses GTP + AH2 + S-adenosyl-L-methionine = (8S)-3',8-cyclo-7,8-dihydroguanosine 5'-triphosphate + 5'-deoxyadenosine + L-methionine + A + H(+). Its pathway is cofactor biosynthesis; molybdopterin biosynthesis. In terms of biological role, catalyzes the cyclization of GTP to (8S)-3',8-cyclo-7,8-dihydroguanosine 5'-triphosphate. This Rhodococcus opacus (strain B4) protein is GTP 3',8-cyclase.